The following is a 156-amino-acid chain: Large ribosomal subunit protein uL23 (156 aa).

Residues M1–A19 show a composition bias toward basic and acidic residues. Residues M1–R67 are disordered. A2 is modified (n,N,N-trimethylalanine). K14 is covalently cross-linked (Glycyl lysine isopeptide (Lys-Gly) (interchain with G-Cter in SUMO2)). Basic residues predominate over residues K20 to R67. Residues V32–Y74 form a beta-like import receptor binding (BIB) domain region. The residue at position 41 (R41) is a Citrulline. S43 carries the post-translational modification Phosphoserine. T45 bears the Phosphothreonine mark. At K70 the chain carries N6-acetyllysine.

It belongs to the universal ribosomal protein uL23 family. As to quaternary structure, component of the large ribosomal subunit. Interacts with LYAR and GNL2. Interacts with MDM2; this interaction may promote MDM2-mediated p53/TP53 polyubiquitination. Directly interacts (via BIB domain) with IPO5, IPO7, KPNB1 and TNPO1; these interactions are involved in RPL23A nuclear import for the assembly of ribosomal subunits. Interacts with IPO8. Post-translationally, N-terminus is methylated by METTL11A/NTM1. In terms of processing, citrullinated by PADI4.

The protein resides in the cytoplasm. Its subcellular location is the nucleus. Functionally, component of the large ribosomal subunit. The ribosome is a large ribonucleoprotein complex responsible for the synthesis of proteins in the cell. Binds a specific region on the 26S rRNA. May promote p53/TP53 degradation possibly through the stimulation of MDM2-mediated TP53 polyubiquitination. This chain is Large ribosomal subunit protein uL23 (RPL23A), found in Bos taurus (Bovine).